The following is a 173-amino-acid chain: Alpha-crystallin A chain (173 aa).

Residue Met1 is modified to N-acetylmethionine. A required for complex formation with BFSP1 and BFSP2 region spans residues 1–63; the sequence is MDIAIQHPWF…RTVLDSGISE (63 aa). Gln6 carries the post-translational modification Deamidated glutamine; partial. At Ser45 the chain carries Phosphoserine. At Gln50 the chain carries Deamidated glutamine; partial. One can recognise a sHSP domain in the interval 52–162; it reads LFRTVLDSGI…GHSERAIPVS (111 aa). N6-acetyllysine occurs at positions 70 and 99. His100 is a Zn(2+) binding site. At Asn101 the chain carries Deamidated asparagine; partial. Zn(2+) contacts are provided by Glu102 and His107. Ser122 carries the post-translational modification Phosphoserine. The residue at position 123 (Asn123) is a Deamidated asparagine; partial. The tract at residues 144–173 is disordered; the sequence is PKVPSGVDAGHSERAIPVSREEKPSSAPSS. A compositionally biased stretch (basic and acidic residues) spans 153–167; it reads GHSERAIPVSREEKP. His154 lines the Zn(2+) pocket. The O-linked (GlcNAc) serine glycan is linked to Ser162.

The protein belongs to the small heat shock protein (HSP20) family. As to quaternary structure, heteromer composed of three CRYAA and one CRYAB subunits. Inter-subunit bridging via zinc ions enhances stability, which is crucial as there is no protein turn over in the lens. Can also form homodimers and homotetramers (dimers of dimers) which serve as the building blocks of homooligomers. Within homooligomers, the zinc-binding motif is created from residues of 3 different molecules. His-100 and Glu-102 from one molecule are ligands of the zinc ion, and His-107 and His-154 residues from additional molecules complete the site with tetrahedral coordination geometry. Part of a complex required for lens intermediate filament formation composed of BFSP1, BFSP2 and CRYAA. In terms of processing, acetylation at Lys-70 may increase chaperone activity. Undergoes age-dependent proteolytical cleavage at the C-terminus.

The protein resides in the cytoplasm. It localises to the nucleus. Functionally, contributes to the transparency and refractive index of the lens. Acts as a chaperone, preventing aggregation of various proteins under a wide range of stress conditions. Required for the correct formation of lens intermediate filaments as part of a complex composed of BFSP1, BFSP2 and CRYAA. This chain is Alpha-crystallin A chain (CRYAA), found in Canis lupus familiaris (Dog).